We begin with the raw amino-acid sequence, 100 residues long: Apolipoprotein C-II (100 aa).

Residues 1–22 (MGSRFLLALFLVLLVLGYEVQG) form the signal peptide. Positions 66-74 (SVDEKLRDM) are lipid binding. The lipoprotein lipase cofactor stretch occupies residues 78 to 100 (SSAAVSTYAGIFTDQILTLLKGE).

The protein belongs to the apolipoprotein C2 family. Proapolipoprotein C-II is synthesized as a sialic acid containing glycoprotein which is subsequently desialylated prior to its proteolytic processing. Post-translationally, proapolipoprotein C-II, the major form found in plasma undergoes proteolytic cleavage of its N-terminal hexapeptide to generate the mature form apolipoprotein C-II, which occurs as the minor form in plasma.

The protein resides in the secreted. Component of chylomicrons, very low-density lipoproteins (VLDL), low-density lipoproteins (LDL), and high-density lipoproteins (HDL) in plasma. Plays an important role in lipoprotein metabolism as an activator of lipoprotein lipase. In Neotoma lepida (Desert woodrat), this protein is Apolipoprotein C-II (Apoc2).